We begin with the raw amino-acid sequence, 366 residues long: tRNA (guanine(26)-N(2))-dimethyltransferase (366 aa).

Residues 1–28 (MEVSEGSVTVEVPEERHGASEGSGEGVF) are disordered. The Trm1 methyltransferase domain occupies 1 to 365 (MEVSEGSVTV…ADVADIRNAV (365 aa)). S-adenosyl-L-methionine contacts are provided by Arg-37, Arg-64, and Asp-79. Zn(2+)-binding residues include Cys-234, Cys-237, Cys-254, and Cys-257.

This sequence belongs to the class I-like SAM-binding methyltransferase superfamily. Trm1 family.

The enzyme catalyses guanosine(26) in tRNA + 2 S-adenosyl-L-methionine = N(2)-dimethylguanosine(26) in tRNA + 2 S-adenosyl-L-homocysteine + 2 H(+). Its function is as follows. Dimethylates a single guanine residue at position 26 of a number of tRNAs using S-adenosyl-L-methionine as donor of the methyl groups. The chain is tRNA (guanine(26)-N(2))-dimethyltransferase from Natronomonas pharaonis (strain ATCC 35678 / DSM 2160 / CIP 103997 / JCM 8858 / NBRC 14720 / NCIMB 2260 / Gabara) (Halobacterium pharaonis).